The primary structure comprises 318 residues: MQKNYRVLLYYKYTAIENPEKFKDEHLAYCKSQDLLGRILVSSEGINGTLSGTFEQTENYMDYLKSLQGFEDIFFKIDEVDAHAFSKMHVRVKKELVNLSLEDDVNPLEITGKYLEPIEFYQKLQDPNTVVIDARNDYEFDLGHFRGAIKPEIKNFRDLPDWIRENKDQFKDKEILTYCTGGVRCEKFSGWLIKEGFNVAGQLHGGIHNYGTSKDTEGKLWDGKMYVFDERIAVDINKHEHVVVGRDYFTNEPCERYINCGNPECNKQILASEASEEKYLGSCSHACRIHPNNRYVKKHNLTTDFVLQHIASNLETQI.

In terms of domain architecture, Rhodanese spans Q125–K219. Catalysis depends on C179, which acts as the Cysteine persulfide intermediate.

This sequence belongs to the TrhO family.

It catalyses the reaction uridine(34) in tRNA + AH2 + O2 = 5-hydroxyuridine(34) in tRNA + A + H2O. In terms of biological role, catalyzes oxygen-dependent 5-hydroxyuridine (ho5U) modification at position 34 in tRNAs. In Acholeplasma laidlawii (strain PG-8A), this protein is tRNA uridine(34) hydroxylase.